The following is a 419-amino-acid chain: Gamma-glutamyl phosphate reductase (419 aa).

This sequence belongs to the gamma-glutamyl phosphate reductase family.

The protein localises to the cytoplasm. The enzyme catalyses L-glutamate 5-semialdehyde + phosphate + NADP(+) = L-glutamyl 5-phosphate + NADPH + H(+). The protein operates within amino-acid biosynthesis; L-proline biosynthesis; L-glutamate 5-semialdehyde from L-glutamate: step 2/2. Its function is as follows. Catalyzes the NADPH-dependent reduction of L-glutamate 5-phosphate into L-glutamate 5-semialdehyde and phosphate. The product spontaneously undergoes cyclization to form 1-pyrroline-5-carboxylate. This is Gamma-glutamyl phosphate reductase from Caulobacter sp. (strain K31).